A 263-amino-acid chain; its full sequence is MNSLNNLRTNNPLVICYTNDVVKNFTANGLLSLGASPAMSQAPEEAIDMLTPANALLINIGTLTKDREQDILEIAKTANEVGTPIVFDPVAVGASQYRKDFCKTFLNTVDVVVIKGNASEILALINNDAKMKGTDSDDNLNAIEIAKEAHKRLNSAIIITGKEDVVIQDNQIYQLNNGSALLAKVTGAGCLLGAVIASFLPTDETTSISQLVEATSIYNIAAEKAEQLAEDKGPGTFMTLLLDALYQVTYDDYSNQSDIQEVQ.

M39 serves as a coordination point for substrate. Residues K115 and T160 each contribute to the ATP site. G187 is a binding site for substrate.

Belongs to the Thz kinase family. Requires Mg(2+) as cofactor.

It carries out the reaction 5-(2-hydroxyethyl)-4-methylthiazole + ATP = 4-methyl-5-(2-phosphooxyethyl)-thiazole + ADP + H(+). It participates in cofactor biosynthesis; thiamine diphosphate biosynthesis; 4-methyl-5-(2-phosphoethyl)-thiazole from 5-(2-hydroxyethyl)-4-methylthiazole: step 1/1. Catalyzes the phosphorylation of the hydroxyl group of 4-methyl-5-beta-hydroxyethylthiazole (THZ). The protein is Hydroxyethylthiazole kinase of Staphylococcus saprophyticus subsp. saprophyticus (strain ATCC 15305 / DSM 20229 / NCIMB 8711 / NCTC 7292 / S-41).